The primary structure comprises 461 residues: MIRTRFAPSPTGYLHIGGVRTALFSWAYARKNNGVFVLRIEDTDLERSTPESVKAILDGMHWVGLDYDEGPFYQTHRFDRYKEVIQQLLDSGHAYHCYCSKEELEAMRAEQEARGDKPRYDRRWRPEAGKTLPAIPEGVQPVVRFKTPLSGVVAWDDAVKGRIEISNEELDDLIIARPDGSPTYNFCVVVDDWDMRITHVIRGDDHVNNTPRQINILKALNAPLPVYGHLPMILNEDGQKMSKRRDAVSVVDYADKGILPEALLNYLARLGWGHGDDEFFSMEQFVEWFSLEAVSPSASRFNHEKFMWLNAQHIKAADNARLAELIAPRLAAAHVDTAHGPAIGDVLALVKERVQDLNALALEVDYFYKKREPAAADVEKHLAGDAVERMGRFADRLAALEAWTAESIHELFKPFCADEGIKMGQLGMPLRVLVCGTTQTPSVDAVLALIGKEEVLRRIRG.

A 'HIGH' region motif is present at residues 8 to 18; it reads PSPTGYLHIGG. The short motif at 240–244 is the 'KMSKS' region element; that stretch reads KMSKR. K243 contributes to the ATP binding site.

The protein belongs to the class-I aminoacyl-tRNA synthetase family. Glutamate--tRNA ligase type 1 subfamily. As to quaternary structure, monomer.

It localises to the cytoplasm. It carries out the reaction tRNA(Glu) + L-glutamate + ATP = L-glutamyl-tRNA(Glu) + AMP + diphosphate. Functionally, catalyzes the attachment of glutamate to tRNA(Glu) in a two-step reaction: glutamate is first activated by ATP to form Glu-AMP and then transferred to the acceptor end of tRNA(Glu). This is Glutamate--tRNA ligase from Chromobacterium violaceum (strain ATCC 12472 / DSM 30191 / JCM 1249 / CCUG 213 / NBRC 12614 / NCIMB 9131 / NCTC 9757 / MK).